The following is a 400-amino-acid chain: Phosphoglycerate kinase (400 aa).

Substrate-binding positions include 19–21 (DLN), Arg-38, 61–64 (HLGR), Arg-124, and Arg-161. Residues Lys-211, Gly-299, Glu-330, and 356–359 (GGDS) contribute to the ATP site.

It belongs to the phosphoglycerate kinase family. Monomer.

The protein localises to the cytoplasm. The catalysed reaction is (2R)-3-phosphoglycerate + ATP = (2R)-3-phospho-glyceroyl phosphate + ADP. The protein operates within carbohydrate degradation; glycolysis; pyruvate from D-glyceraldehyde 3-phosphate: step 2/5. The chain is Phosphoglycerate kinase from Frankia alni (strain DSM 45986 / CECT 9034 / ACN14a).